The following is a 788-amino-acid chain: MVECITPEAIFIGANKQTQVSDIHKVKKIVAFGAGKTIALWDPIEPNNKGVYATLKGHEAEVTCVRFVPDSDFMVSASEDHHVKIWKFTDYSHLQCIQTIQHYSKTIVALSALPSLISVGCADGTISIWRQNIQNDEFGLAHEFTIKKGFFYPLCLSLSKVEEKKYLLAIGGTNVNVFIASFILSDSGIEKCRVVAELEGHEDWVKSLAFRHQETPGDYLLCSGSQDRYIRLWRIRINDLIDDSEEDSKKLTLLSNKQYKFQIDDELRVGINFEALIMGHDDWISSLQWHESRLQLLAATADTSLMVWEPDETSGIWVCSLRLGEMSSKGASTATGSSGGFWSCLWFTHERMDFFLTNGKTGSWRMWATKDNIICDQRLGISGATKDVTDIAWSPSGEYLLATSLDQTTRLFAPWIYDASGRKREIATWHEFSRPQIHGYDMICVETVTDTRFVSGGDEKILRSFDLPKGVAGMLQKFVGIQFEEKSEMPDSATVPVLGLSNKAGEDDANEDDEEEEGGNKETPDITDPLSLLECPPMEDQLQRHLLWPEVEKLYGHGFEITCLDISPDQKLIASACRSNNVQNAVIRIFSTENWLEIKPALPFHSLTITRLKFSKDGKFLLSVCRDRKWALWERNMEDNTFELRFKNEKPHTRIIWDADWAPLEFGNVFVTASRDKTVKVWRHQKEPADDYVLEASIKHTKAVTAISIHDSMIREKILISVGLENGEIYLYSYTLGKFELITQLNEDITPADKITRLRWSHLKRNGKLFLGVGSSDLSTRIYSLAYE.

WD repeat units lie at residues 13–51 (GANK…NKGV), 57–96 (GHEA…HLQC), 102–139 (HYSK…DEFG), 200–243 (GHED…LIDD), 279–318 (GHDD…GIWV), 336–377 (GSSG…ICDQ), 383–422 (GATK…ASGR), and 437–475 (IHGY…AGML). A disordered region spans residues 490 to 530 (PDSATVPVLGLSNKAGEDDANEDDEEEEGGNKETPDITDPL). At Ser-492 the chain carries Phosphoserine. The span at 507–517 (DDANEDDEEEE) shows a compositional bias: acidic residues. WD repeat units follow at residues 556–600 (GHGF…EIKP), 604–643 (FHSL…NTFE), 651–692 (PHTR…ADDY), 699–742 (KHTK…FELI), and 750–788 (TPAD…LAYE).

This sequence belongs to the WD repeat ELP2 family. As to quaternary structure, component of the elongator complex which consists of ELP1/IKI3, ELP2, ELP3, ELP4, ELP5/IKI1 and ELP6. The elongator complex is composed of two copies of the Elp123 subcomplex (composed of ELP1/IKI3, ELP2 and ELP3) and two copies of the Elp456 subcomplex (composed of ELP4, ELP5/IKI1 and ELP6). The Elp123 subcomplex forms a two-lobed scaffold, which binds the Elp456 subcomplex asymmetrically. In the complex, ELP2 interacts with ELP1/IKI3. In each lobe, ELP2 is tightly sandwiched between ELP1/IKI3 and ELP3. The Elp123 subcomplex binds tRNA through ELP1/IKI3 and ELP3 and can bind 2 tRNAs simultaneously. tRNA-binding induces conformational rearrangements which precisely position the targeted anticodon base in the active site. The Elp456 subcomplex binds tRNA and has ATPase activity. Interacts with KTI11/DPH3.

Its subcellular location is the cytoplasm. The protein resides in the nucleus. It functions in the pathway tRNA modification; 5-methoxycarbonylmethyl-2-thiouridine-tRNA biosynthesis. In terms of biological role, component of the elongator complex, a multiprotein complex which is required for multiple tRNA modifications, including mcm5U (5-methoxycarbonylmethyl uridine), mcm5s2U (5-methoxycarbonylmethyl-2-thiouridine), and ncm5U (5-carbamoylmethyl uridine). The elongator complex catalyzes formation of carboxymethyluridine in the wobble base at position 34 in tRNAs. It functions as a gamma-toxin target (TOT); disruption of the complex confers resistance to Kluyveromyces lactis toxin zymocin (pGKL1 killer toxin). May also be involved in sensitivity to Pichia inositovora toxin. ELP2 binds to microtubules. Independently, ELP2 may be involved in polarized exocytosis. This Saccharomyces cerevisiae (strain ATCC 204508 / S288c) (Baker's yeast) protein is Elongator complex protein 2 (ELP2).